The primary structure comprises 401 residues: Succinyl-diaminopimelate desuccinylase (401 aa).

H82 is a Zn(2+) binding site. D84 is an active-site residue. D115 is a binding site for Zn(2+). E149 serves as the catalytic Proton acceptor. Positions 150, 178, and 364 each coordinate Zn(2+).

Belongs to the peptidase M20A family. DapE subfamily. Homodimer. It depends on Zn(2+) as a cofactor. The cofactor is Co(2+).

The catalysed reaction is N-succinyl-(2S,6S)-2,6-diaminopimelate + H2O = (2S,6S)-2,6-diaminopimelate + succinate. It functions in the pathway amino-acid biosynthesis; L-lysine biosynthesis via DAP pathway; LL-2,6-diaminopimelate from (S)-tetrahydrodipicolinate (succinylase route): step 3/3. Its function is as follows. Catalyzes the hydrolysis of N-succinyl-L,L-diaminopimelic acid (SDAP), forming succinate and LL-2,6-diaminopimelate (DAP), an intermediate involved in the bacterial biosynthesis of lysine and meso-diaminopimelic acid, an essential component of bacterial cell walls. The polypeptide is Succinyl-diaminopimelate desuccinylase (Verminephrobacter eiseniae (strain EF01-2)).